Reading from the N-terminus, the 241-residue chain is Nickel import ATP-binding protein LarO (241 aa).

Positions 2–240 (IKLVNICYDY…QPARQAQLMT (239 aa)) constitute an ABC transporter domain. 34 to 41 (GPNGSGKS) lines the ATP pocket.

The protein belongs to the ABC transporter superfamily. May form an energy-coupling factor (ECF) transporter complex composed of an ATP-binding protein (A component, LarO), a transmembrane protein (T component, LarQ) and a fused possible substrate-capture protein (S component, LarMN) of unknown stoichiometry.

It is found in the cell membrane. In terms of biological role, probable ATP-binding component of the energy-coupling factor (ECF) transporter complex LarMNQO involved in nickel import. LarO is presumably responsible for energy coupling to the transport system. The protein is Nickel import ATP-binding protein LarO of Lactiplantibacillus plantarum (strain ATCC BAA-793 / NCIMB 8826 / WCFS1) (Lactobacillus plantarum).